The chain runs to 170 residues: Large ribosomal subunit protein bL17 (170 aa).

Over residues 134–144 the composition is skewed to low complexity; that stretch reads ASAKAAQAQEK. The disordered stretch occupies residues 134–170; sequence ASAKAAQAQEKPAQEEEVEATSDEVAYTSEPDKAAEH.

It belongs to the bacterial ribosomal protein bL17 family. As to quaternary structure, part of the 50S ribosomal subunit. Contacts protein L32.

This chain is Large ribosomal subunit protein bL17, found in Mycobacterium leprae (strain Br4923).